Reading from the N-terminus, the 269-residue chain is Shikimate dehydrogenase (NADP(+)) (269 aa).

Residues 14–16 and threonine 61 contribute to the shikimate site; that span reads SLS. The active-site Proton acceptor is the lysine 65. Residue glutamate 76 coordinates NADP(+). Residues asparagine 85 and aspartate 99 each coordinate shikimate. Residues 123–127, 146–151, and isoleucine 209 contribute to the NADP(+) site; these read GAGGA and NRTPER. Residue tyrosine 211 participates in shikimate binding. Glycine 231 is a binding site for NADP(+).

Belongs to the shikimate dehydrogenase family. In terms of assembly, homodimer.

The enzyme catalyses shikimate + NADP(+) = 3-dehydroshikimate + NADPH + H(+). It functions in the pathway metabolic intermediate biosynthesis; chorismate biosynthesis; chorismate from D-erythrose 4-phosphate and phosphoenolpyruvate: step 4/7. Functionally, involved in the biosynthesis of the chorismate, which leads to the biosynthesis of aromatic amino acids. Catalyzes the reversible NADPH linked reduction of 3-dehydroshikimate (DHSA) to yield shikimate (SA). This Methanothrix thermoacetophila (strain DSM 6194 / JCM 14653 / NBRC 101360 / PT) (Methanosaeta thermophila) protein is Shikimate dehydrogenase (NADP(+)).